The sequence spans 309 residues: Olfactory receptor 5AK2 (309 aa).

The Extracellular portion of the chain corresponds to 1–25; that stretch reads MTLGNSTEVTEFYLLGFGAQHEFWC. Asparagine 5 carries N-linked (GlcNAc...) asparagine glycosylation. Residues 26–46 traverse the membrane as a helical segment; it reads ILFIVFLLIYVTSIMGNSGII. Residues 47–54 are Cytoplasmic-facing; that stretch reads LLINTDSR. The helical transmembrane segment at 55–75 threads the bilayer; sequence FQTLTYFFLQHLAFVDICYTS. Over 76–99 the chain is Extracellular; it reads AITPKMLQSFTEEKNLMLFQGCVI. Residues cysteine 97 and cysteine 189 are joined by a disulfide bond. Residues 100–120 traverse the membrane as a helical segment; sequence QFLVYATFATSDCYLLAMMAV. At 121–133 the chain is on the cytoplasmic side; the sequence is DPYVAICKPLHYT. The chain crosses the membrane as a helical span at residues 134–154; sequence VIMSRTVCIRLVAGSYIMGSI. Asparagine 155 is a glycosylation site (N-linked (GlcNAc...) asparagine). Over 155-196 the chain is Extracellular; the sequence is NASVQTGFTCSLSFCKSNSINHFFCDVPPILALSCSNVDINI. A helical transmembrane segment spans residues 197–217; sequence MLLVVFVGSNLIFTGLVVIFS. Residues 218–237 are Cytoplasmic-facing; sequence YIYIMATILKMSSSAGRKKS. A helical transmembrane segment spans residues 238 to 258; sequence FSTCASHLTAVTIFYGTLSYM. Over 259 to 271 the chain is Extracellular; sequence YLQSHSNNSQENM. An N-linked (GlcNAc...) asparagine glycan is attached at asparagine 265. The helical transmembrane segment at 272-292 threads the bilayer; that stretch reads KVAFIFYGTVIPMLNPLIYSL. Over 293–309 the chain is Cytoplasmic; the sequence is RNKEVKEALKVIGKKLF.

Belongs to the G-protein coupled receptor 1 family.

It localises to the cell membrane. Its function is as follows. Odorant receptor. The protein is Olfactory receptor 5AK2 (OR5AK2) of Homo sapiens (Human).